We begin with the raw amino-acid sequence, 574 residues long: Myo-inositol transporter FST1 (574 aa).

Residues 1–76 are Cytoplasmic-facing; that stretch reads MGKSRQNSTT…VQFANPKHFT (76 aa). A helical transmembrane segment spans residues 77-97; that stretch reads WLLVAFASMGGLLSGLDQSLI. The Extracellular segment spans residues 98 to 115; it reads SGANLFLPDDLGLTEHEN. The helical transmembrane segment at 116–136 threads the bilayer; it reads SLVNSGMPLGAVGGALLLSPA. Residues 137 to 143 lie on the Cytoplasmic side of the membrane; the sequence is NEYFGRK. The chain crosses the membrane as a helical span at residues 144–164; that stretch reads GAIIISIILYTIGAALEAGSI. At 165 to 173 the chain is on the extracellular side; the sequence is NFGMIVSSR. A helical transmembrane segment spans residues 174–194; sequence VILGLGVGLEGGTVPVYVAET. At 195-205 the chain is on the cytoplasmic side; it reads VERRIRGNLVS. A helical membrane pass occupies residues 206–226; the sequence is LYQFNIALGEVLGYAVGAIFL. The Extracellular portion of the chain corresponds to 227–233; sequence NVPGNWR. A helical transmembrane segment spans residues 234 to 254; the sequence is YILGSSLLFSTIMFFGMLFLP. Residues 255–330 are Cytoplasmic-facing; the sequence is ESPRFLIHQK…RARRALVYAN (76 aa). A helical transmembrane segment spans residues 331–351; the sequence is IMILLGQLTGVNAIMYYMSVL. Residues 352 to 363 lie on the Extracellular side of the membrane; that stretch reads MNQIGFDKKESN. Residues 364–384 traverse the membrane as a helical segment; sequence YMSLVGGGSLLLGTIPAIFLM. At 385 to 390 the chain is on the cytoplasmic side; it reads ERFGRR. The chain crosses the membrane as a helical span at residues 391–411; it reads FWAITMLPGFFIGLVLIGVSY. The Extracellular segment spans residues 412 to 426; that stretch reads QFDVETQLQTVEGLY. The helical transmembrane segment at 427 to 447 threads the bilayer; it reads LSGLIIYMGFFGSYACLTWVV. Residues 448 to 465 lie on the Cytoplasmic side of the membrane; that stretch reads PSEVYPTYLRSYGMTTSD. The helical transmembrane segment at 466-486 threads the bilayer; it reads ALLFLASFIVTYNFTAMQNAM. Residues 487-490 lie on the Extracellular side of the membrane; sequence GKTG. A helical transmembrane segment spans residues 491–511; sequence LALGFYGGIAFIGEIYQIFFM. Residues 512–574 are Cytoplasmic-facing; it reads PETKNKTLEE…PKDQVQVSHA (63 aa).

Belongs to the major facilitator superfamily. Sugar transporter (TC 2.A.1.1) family.

The protein resides in the cell membrane. It carries out the reaction myo-inositol(out) + H(+)(out) = myo-inositol(in) + H(+)(in). Transporter for myo-inositol. Also appears to transport the polyketide mycotoxin fumonisin B1 (FB1). Does not appear to transport hexose sugars. This chain is Myo-inositol transporter FST1, found in Gibberella moniliformis (strain M3125 / FGSC 7600) (Maize ear and stalk rot fungus).